We begin with the raw amino-acid sequence, 217 residues long: Proteasome subunit beta type-6-A like protein (217 aa).

A propeptide spans 1 to 16 (MERHLMDSQIKGVSTG) (removed in mature form). The Nucleophile role is filled by threonine 17.

The protein belongs to the peptidase T1B family. The 26S proteasome consists of a 20S proteasome core and two 19S regulatory subunits. The 20S proteasome core is composed of 28 subunits that are arranged in four stacked rings, resulting in a barrel-shaped structure. The two end rings are each formed by seven alpha subunits, and the two central rings are each formed by seven beta subunits. The catalytic chamber with the active sites is on the inside of the barrel.

The protein localises to the cytoplasm. The protein resides in the nucleus. The enzyme catalyses Cleavage of peptide bonds with very broad specificity.. The proteasome is a multicatalytic proteinase complex which is characterized by its ability to cleave peptides with Arg, Phe, Tyr, Leu, and Glu adjacent to the leaving group at neutral or slightly basic pH. The proteasome has an ATP-dependent proteolytic activity. This subunit is involved in antigen processing to generate class I binding peptides. The sequence is that of Proteasome subunit beta type-6-A like protein (psmb6l-a) from Salmo salar (Atlantic salmon).